Here is a 342-residue protein sequence, read N- to C-terminus: MSKLAEKLKAVAAAVASIEKQFGRGSVMTLGGEAREQKVAVIPSGSVGVDRALGVGGYPRGRVVEVFGNESSGKTTLTLHAIAQVQAAGGVAAFIDAEHALDVSYARKLGVRVEELLVSQPDTGEQALEITEHLVRSGAVDLIVVDSVAALVPRAEIEGEMGDAHMGVQARLMSQALRKLTGAVSRSGTCIIFINQIRMKIGVMFGNPETTTGGNALKFYASVRMEIRRTGNIKDGDAVVGSKARVKVVKNKVAPPFQEAEFDLMYGSGIHRVGEVLDLGVATGLIEKSGSYFSLRGERIGQGRERAAEWLREHPDVLEALGKEITGTSALPSSPAPVEVAA.

68–75 (GNESSGKT) lines the ATP pocket.

It belongs to the RecA family.

Its subcellular location is the cytoplasm. In terms of biological role, can catalyze the hydrolysis of ATP in the presence of single-stranded DNA, the ATP-dependent uptake of single-stranded DNA by duplex DNA, and the ATP-dependent hybridization of homologous single-stranded DNAs. It interacts with LexA causing its activation and leading to its autocatalytic cleavage. The polypeptide is Protein RecA 1 (Myxococcus xanthus).